The sequence spans 432 residues: Adenylosuccinate synthetase (432 aa).

GTP is bound by residues 13-19 (GDEGKGK) and 41-43 (GHT). Residue D14 is the Proton acceptor of the active site. Mg(2+)-binding residues include D14 and G41. IMP-binding positions include 14-17 (DEGK), 39-42 (NAGH), T131, R145, Q226, T241, and R305. Residue H42 is the Proton donor of the active site. Residue 301-307 (SVTGRAR) coordinates substrate. GTP-binding positions include R307, 333–335 (KLD), and 416–418 (STG).

The protein belongs to the adenylosuccinate synthetase family. Homodimer. Mg(2+) serves as cofactor.

The protein resides in the cytoplasm. The catalysed reaction is IMP + L-aspartate + GTP = N(6)-(1,2-dicarboxyethyl)-AMP + GDP + phosphate + 2 H(+). Its pathway is purine metabolism; AMP biosynthesis via de novo pathway; AMP from IMP: step 1/2. Plays an important role in the de novo pathway of purine nucleotide biosynthesis. Catalyzes the first committed step in the biosynthesis of AMP from IMP. This Neisseria meningitidis serogroup B (strain ATCC BAA-335 / MC58) protein is Adenylosuccinate synthetase.